The following is a 305-amino-acid chain: Ornithine carbamoyltransferase (305 aa).

Residues 54–57, glutamine 81, arginine 105, and 132–135 each bind carbamoyl phosphate; these read STRT and HPCQ. L-ornithine contacts are provided by residues asparagine 163, aspartate 223, and 227-228; that span reads SM. Carbamoyl phosphate-binding positions include 262-263 and arginine 290; that span reads CL.

This sequence belongs to the aspartate/ornithine carbamoyltransferase superfamily. OTCase family.

Its subcellular location is the cytoplasm. The enzyme catalyses carbamoyl phosphate + L-ornithine = L-citrulline + phosphate + H(+). The protein operates within amino-acid biosynthesis; L-arginine biosynthesis; L-arginine from L-ornithine and carbamoyl phosphate: step 1/3. Functionally, reversibly catalyzes the transfer of the carbamoyl group from carbamoyl phosphate (CP) to the N(epsilon) atom of ornithine (ORN) to produce L-citrulline. In Agrobacterium fabrum (strain C58 / ATCC 33970) (Agrobacterium tumefaciens (strain C58)), this protein is Ornithine carbamoyltransferase.